The sequence spans 819 residues: MMLAQKQNFMNQFYKKYHYSIQKYQITDLLFFLFLYPFSTSYGNEQFSFDSRFLPSGYNYSLNSNLPPEGEYLVDIYINKIKKESAIIPFYIKGNKLVPCLSKEKLSSLGININNNDNAECAETSKAGISNISFEFSSLRLFIAVPKNLLSEIDKISSKDIDNGIHALFFNYQVNTRLANNKNRYDYISVSPNINYFSWRLRNRFEFNQNNDKKTWERNYTYLEKSFYDKKLNLIVGESYTSSNVYNNYSFTGISVSTDTDMYTPSEIDYTPEIHGVADSDSQIIVRQGNTIIINESVPAGPFSFPITNLMYTGGQLNVEITDIYGNKKQYTVSNSSLPVMRKAGLMVYNFISGKLTKKNSEDGDFFAQGDINYGTHYNSTLFGGYQFSKNYFNLSTGIGTDLGFSGAWLLNVSRSNFKDKNGYNINLQQNTQLRPFNAGVNFDYIYRKKGYVELSGIGWHGNLYNQLKNSFSLSLSKSLDKYGNFSLDYNKIKYWDNAYDSNSMSIRYFFKFMRAMITTNYSLNKYQSYEKKDKRFSINISLPLTKDYGHISSNYSFSNANTGTATSSVGVNGSFFNDARLNWNIQQNRTTRNNGYTDNTSYIATSYASPYGVFTGSYSGSNKYSSQFYSALGGIVLHSDGVAFTQKAGDTSALVRIDNISDIKIGNTPGVYTGYNGFALIPHLQPFKKNTILINDKGIPDDIALANIKKQVIPSRGAIVKVKFDAKKGNNILFKLTTKDGKTPPLGAIAHEKNGKQINTGIVDDDGMLYMSGLSGAGIINVTWNGKVCSFPFSEKDISSKQLSVVNKQCNRPENSGD.

Belongs to the fimbrial export usher family.

It localises to the cell outer membrane. Its function is as follows. Involved in the export and assembly of C6 fimbrial subunits across the outer membrane. This is Outer membrane usher protein CssD (cssD) from Escherichia coli.